Reading from the N-terminus, the 628-residue chain is 1-deoxy-D-xylulose-5-phosphate synthase (628 aa).

Thiamine diphosphate is bound by residues histidine 72 and 113–115 (GHS). Aspartate 144 contributes to the Mg(2+) binding site. Thiamine diphosphate contacts are provided by residues 145–146 (GA), asparagine 173, tyrosine 284, and glutamate 367. Asparagine 173 lines the Mg(2+) pocket.

This sequence belongs to the transketolase family. DXPS subfamily. As to quaternary structure, homodimer. Mg(2+) serves as cofactor. The cofactor is thiamine diphosphate.

The catalysed reaction is D-glyceraldehyde 3-phosphate + pyruvate + H(+) = 1-deoxy-D-xylulose 5-phosphate + CO2. The protein operates within metabolic intermediate biosynthesis; 1-deoxy-D-xylulose 5-phosphate biosynthesis; 1-deoxy-D-xylulose 5-phosphate from D-glyceraldehyde 3-phosphate and pyruvate: step 1/1. Its function is as follows. Catalyzes the acyloin condensation reaction between C atoms 2 and 3 of pyruvate and glyceraldehyde 3-phosphate to yield 1-deoxy-D-xylulose-5-phosphate (DXP). This is 1-deoxy-D-xylulose-5-phosphate synthase from Exiguobacterium sibiricum (strain DSM 17290 / CCUG 55495 / CIP 109462 / JCM 13490 / 255-15).